Reading from the N-terminus, the 378-residue chain is Mannitol-1-phosphate 5-dehydrogenase (378 aa).

4 to 15 is an NAD(+) binding site; sequence SVHFGAGNIGRG.

It belongs to the mannitol dehydrogenase family.

The catalysed reaction is D-mannitol 1-phosphate + NAD(+) = beta-D-fructose 6-phosphate + NADH + H(+). The chain is Mannitol-1-phosphate 5-dehydrogenase from Streptococcus pneumoniae (strain ATCC 700669 / Spain 23F-1).